Reading from the N-terminus, the 715-residue chain is Scinderin (715 aa).

The segment at 1-363 (MAQGLYHEEF…DGFGKVYVTE (363 aa)) is actin-severing. Residues 27–77 (LELVPVPESAYGNFYVGDAYLVLHTTQASRGFTYRLHFWLGKECTQDESTA) form a Gelsolin-like 1 repeat. Tyr102 bears the Phosphotyrosine mark. A 1,2-diacyl-sn-glycero-3-phospho-(1D-myo-inositol-4,5-bisphosphate)-binding positions include 112–119 (KGGLKYKA) and 138–146 (RLLHVKGRR). Gelsolin-like repeat units lie at residues 148–188 (VRAT…YERL), 265–307 (LVAE…QERK), 398–451 (VQIW…DELT), and 523–564 (TRIM…EEEK). The interval 364–715 (KVAHVKQIPF…WFLGWDSSRW (352 aa)) is actin-binding, Ca-sensitive. A ca(2+)-dependent actin binding region spans residues 364 to 715 (KVAHVKQIPF…WFLGWDSSRW (352 aa)). Positions 538, 539, and 562 each coordinate Ca(2+). Tyr599 is modified (phosphotyrosine). Residues 626 to 668 (FIIEEVPGEFTQDDLAEDDVMLLDAWEQIFIWIGKDANEVEKS) form a Gelsolin-like 6 repeat. Ca(2+)-binding residues include Asp643, Asp644, and Glu666.

It belongs to the villin/gelsolin family. In terms of processing, the N-terminus is blocked. In terms of tissue distribution, in the adrenal gland, expressed in the medulla but, in the cortex, found only in diffuse parts.

The protein localises to the cytoplasm. It localises to the cytoskeleton. Its subcellular location is the cell projection. It is found in the podosome. In terms of biological role, ca(2+)-dependent actin filament-severing protein that has a regulatory function in exocytosis by affecting the organization of the microfilament network underneath the plasma membrane. In vitro, also has barbed end capping and nucleating activities in the presence of Ca(2+). Severing activity is inhibited by phosphatidylinositol 4,5-bis-phosphate (PIP2). Required for megakaryocyte differentiation, maturation, polyploidization and apoptosis with the release of platelet-like particles. Plays a role in osteoclastogenesis (OCG) and actin cytoskeletal organization in osteoclasts. Regulates chondrocyte proliferation and differentiation. Inhibits cell proliferation and tumorigenesis. Signaling is mediated by MAPK, p38 and JNK pathways. The chain is Scinderin from Bos taurus (Bovine).